Here is a 559-residue protein sequence, read N- to C-terminus: Chaperonin GroEL 1 (559 aa).

ATP is bound by residues 29–32 (TIGP), 86–90 (DGTTT), G413, 476–478 (NAL), and D492. Positions 521–541 (KPEPPAPAPAGDGDPMGGMGG) are disordered.

The protein belongs to the chaperonin (HSP60) family. In terms of assembly, forms a cylinder of 14 subunits composed of two heptameric rings stacked back-to-back. Interacts with the co-chaperonin GroES.

The protein resides in the cytoplasm. It carries out the reaction ATP + H2O + a folded polypeptide = ADP + phosphate + an unfolded polypeptide.. Its function is as follows. Together with its co-chaperonin GroES, plays an essential role in assisting protein folding. The GroEL-GroES system forms a nano-cage that allows encapsulation of the non-native substrate proteins and provides a physical environment optimized to promote and accelerate protein folding. The polypeptide is Chaperonin GroEL 1 (Synechococcus sp. (strain CC9605)).